A 286-amino-acid chain; its full sequence is Pantothenate synthetase (286 aa).

30 to 37 contacts ATP; sequence MGNLHAGH. H37 acts as the Proton donor in catalysis. (R)-pantoate is bound at residue Q61. Q61 contributes to the beta-alanine binding site. 149–152 contributes to the ATP binding site; the sequence is GEKD. Q155 is a binding site for (R)-pantoate. Residues V178 and 186–189 each bind ATP; that span reads MSSR.

It belongs to the pantothenate synthetase family. In terms of assembly, homodimer.

The protein resides in the cytoplasm. The catalysed reaction is (R)-pantoate + beta-alanine + ATP = (R)-pantothenate + AMP + diphosphate + H(+). It participates in cofactor biosynthesis; (R)-pantothenate biosynthesis; (R)-pantothenate from (R)-pantoate and beta-alanine: step 1/1. In terms of biological role, catalyzes the condensation of pantoate with beta-alanine in an ATP-dependent reaction via a pantoyl-adenylate intermediate. This chain is Pantothenate synthetase, found in Methylococcus capsulatus (strain ATCC 33009 / NCIMB 11132 / Bath).